Consider the following 219-residue polypeptide: Trafficking protein particle complex subunit 4 (219 aa).

Belongs to the TRAPP small subunits family. TRAPPC4 subfamily. Component of the multisubunit TRAPP (transport protein particle) complex, which includes at least TRAPPC2, TRAPPC2L, TRAPPC3, TRAPPC3L, TRAPPC4, TRAPPC5, TRAPPC8, TRAPPC9, TRAPPC10, TRAPPC11 and TRAPPC12. Interacts with SDC2.

Its subcellular location is the postsynaptic cell membrane. It localises to the golgi apparatus membrane. The protein resides in the endoplasmic reticulum. It is found in the vesicle. Functionally, core component of the TRAPP complexes which has a function of guanine nucleotide exchange factor activity for Rab1 GTPase. Plays a role in vesicular transport from endoplasmic reticulum to Golgi and autophagy. May play a role in dendrite postsynaptic membrane trafficking. This Bos taurus (Bovine) protein is Trafficking protein particle complex subunit 4 (TRAPPC4).